A 206-amino-acid chain; its full sequence is Alpha-1-acid glycoprotein 3 (206 aa).

A signal peptide spans 1–18 (MELHTVLIMLSLLPLLEA). Residues asparagine 33, asparagine 75, and asparagine 103 are each glycosylated (N-linked (GlcNAc...) asparagine). Cysteines 90 and 183 form a disulfide. The interval 187 to 206 (EKKHLELEKETKKDPEESQA) is disordered.

It belongs to the calycin superfamily. Lipocalin family.

Its subcellular location is the secreted. Its function is as follows. Functions as a transport protein in the blood stream. Binds various ligands in the interior of its beta-barrel domain. Appears to function in modulating the activity of the immune system during the acute-phase reaction. The chain is Alpha-1-acid glycoprotein 3 (Orm3) from Mus musculus (Mouse).